The sequence spans 391 residues: Calcium-binding and spermatid-specific protein 1 (391 aa).

3 disordered regions span residues 1 to 23 (MAEDGSPKIYSRPPRDNSKTPTE), 90 to 110 (PEKEITTPTETPNSKPKGSIT), and 152 to 221 (KEVV…KEVT). Low complexity predominate over residues 90 to 101 (PEKEITTPTETP). Residues serine 253 and serine 269 each carry the phosphoserine modification. The tract at residues 271-299 (EKAKDNVEDPLNDEESTDGANDWMEKETA) is disordered. Positions 278–287 (EDPLNDEEST) are enriched in acidic residues. Phosphoserine occurs at positions 314, 347, 357, 372, and 376. A disordered region spans residues 330–351 (EESHVNTTDLPENETTESVTNV).

Detected only in testis. Expressed from stages X to VIII of the seminiferous epithelial cycle. Expressed from step 13 to step 16 of spermatid development (at protein level).

The protein localises to the cytoplasm. Its subcellular location is the mitochondrion inner membrane. It is found in the cell projection. The protein resides in the cilium. It localises to the flagellum. The protein localises to the cytoplasmic vesicle. Its subcellular location is the secretory vesicle. It is found in the acrosome. Calcium-binding protein. Essential for maintaining the structural integrity of the sperm flagella. This chain is Calcium-binding and spermatid-specific protein 1 (Cabs1), found in Mus musculus (Mouse).